Here is a 339-residue protein sequence, read N- to C-terminus: Trace amine-associated receptor 1 (339 aa).

The Extracellular segment spans residues 1–24 (MMPFCHNIINISCVKNNWSNDVRA). 3 disulfides stabilise this stretch: C5–C178, C13–C88, and C96–C182. N-linked (GlcNAc...) asparagine glycosylation is found at N10 and N17. A helical membrane pass occupies residues 25-49 (SLYSLMVLIILTTLVGNLIVIVSIS). Over 50 to 59 (HFKQLHTPTN) the chain is Cytoplasmic. A helical transmembrane segment spans residues 60 to 81 (WLIHSMATVDFLLGCLVMPYSM). At 82 to 96 (VRSAEHCWYFGEVFC) the chain is on the extracellular side. Residues 97-119 (KIHTSTDIMLSSASIFHLSFISI) form a helical membrane-spanning segment. Position 103 (D103) interacts with 2-phenylethylamine. At 120–139 (DRYYAVCDPLRYKAKMNILV) the chain is on the cytoplasmic side. Residues 140–161 (ICVMIFISWSVPAVFAFGMIFL) form a helical membrane-spanning segment. Residues 162-188 (ELNFKGAEEIYYKHVHCRGGCSVFFSK) are Extracellular-facing. The segment at 175 to 186 (HVHCRGGCSVFF) is extracellular Loop 2 (ECL2). A helical membrane pass occupies residues 189 to 211 (ISGVLTFMTSFYIPGSIMLCVYY). Topologically, residues 212 to 249 (RIYLIAKEQARLISDANQKLQIGLEMKNGISQSKERKA) are cytoplasmic. Residues 250-273 (VKTLGIVMGVFLICWCPFFICTVM) traverse the membrane as a helical segment. Residues 274–286 (DPFLHYIIPPTLN) lie on the Extracellular side of the membrane. Residues 287–307 (DVLIWFGYLNSTFNPMVYAFF) form a helical membrane-spanning segment. At 308-339 (YPWFRKALKMMLFGKIFQKDSSRCKLFLELSS) the chain is on the cytoplasmic side.

Belongs to the G-protein coupled receptor 1 family. As to expression, expressed at low level in both the central and peripheral nervous system. Moderately expressed in stomach. Low levels in amygdala, kidney, and lung, and small intestine. Trace amounts in cerebellum, dorsal root ganglia, hippocampus, hypothalamus, liver, medulla, pancreas, pituitary, pontine reticular formation, prostate, skeletal muscle and spleen.

Its subcellular location is the endomembrane system. The protein localises to the endoplasmic reticulum membrane. It localises to the cell membrane. Activated by SEP-363856 small molecule: IHCH-7179 acts both as an agonist activator for HTR1A and TAAR1. Its function is as follows. Intracellular G-protein coupled receptor for trace amines, which recognizes endogenous amine-containing metabolites such as beta-phenylethylamine (beta-PEA), 3-iodothyronamine (T1AM), isoamylamine (IAA), cadaverine (CAD), cyclohexylamine (CHA), p-tyramine (p-TYR), trimethylamine (TMA), octopamine and tryptamine. Also functions as a receptor for various drugs and psychoactive substances, such as amphetamine and methamphetamine. Unresponsive to classical biogenic amines, such as epinephrine and histamine and only partially activated by dopamine and serotonin. Expressed in both the central and peripheral nervous system: TAAR1 activation regulates the activity of several neurotransmitter signaling pathways by (1) decreasing the basal firing rates of the neurons involved and by (2) lowering the sensitivity of receptors to neurotransmitters. Ligand binding causes a conformation change that triggers signaling via guanine nucleotide-binding proteins (G proteins) and modulates the activity of downstream effectors. TAAR1 is coupled with different G(i)/G(o)-, G(s)- or G(q)/G(11) classes of G alpha proteins depending on the ligand. CAD-binding is coupled to G(i)/G(o) G alpha proteins and mediates inhibition of adenylate cyclase activity. T1AM- or beta-PEA-binding is coupled to G(s) G alpha proteins and mediates activation of adenylate cyclase activity. CHA- or IAA-binding is coupled to G(q)/G(11) G alpha proteins and activates phospholipase C-beta, releasing diacylglycerol (DAG) and inositol 1,4,5-trisphosphate (IP3) second messengers. TMA-binding is coupled with all three G(i)/G(o)-, G(s)- or G(q)/G(11) G alpha protein subtypes. Amphetamine-binding is coupled with G(s)- or G(12)/G(13) G alpha protein subtypes. The chain is Trace amine-associated receptor 1 from Homo sapiens (Human).